Consider the following 507-residue polypeptide: Probable Xaa-Pro aminopeptidase HCAG_02413 (507 aa).

Mn(2+)-binding residues include Asp-283, Asp-294, Glu-431, and Glu-469.

Belongs to the peptidase M24B family. Mn(2+) serves as cofactor.

It carries out the reaction Release of any N-terminal amino acid, including proline, that is linked to proline, even from a dipeptide or tripeptide.. Catalyzes the removal of a penultimate prolyl residue from the N-termini of peptides. The chain is Probable Xaa-Pro aminopeptidase HCAG_02413 from Ajellomyces capsulatus (strain NAm1 / WU24) (Darling's disease fungus).